The sequence spans 37 residues: Protein YnaM (37 aa).

A helical transmembrane segment spans residues 4 to 24 (ILIITSLLIIFSIFSHALIKL).

It is found in the cell inner membrane. This Escherichia coli (strain K12) protein is Protein YnaM.